The sequence spans 132 residues: Large-conductance mechanosensitive channel (132 aa).

3 helical membrane-spanning segments follow: residues 14 to 34 (VLDMAVGVILGAALKSIVDSL), 39 to 59 (INPIISLFVGQVDLSGIAVTI), and 68 to 88 (IGNFLNDVINFLIIAIIVFLI).

It belongs to the MscL family. Homopentamer.

It is found in the cell membrane. Its function is as follows. Channel that opens in response to stretch forces in the membrane lipid bilayer. May participate in the regulation of osmotic pressure changes within the cell. The polypeptide is Large-conductance mechanosensitive channel (Latilactobacillus sakei subsp. sakei (strain 23K) (Lactobacillus sakei subsp. sakei)).